The following is a 447-amino-acid chain: Adenylosuccinate synthetase (447 aa).

Residues 12–18 (GDEGKGK) and 40–42 (GHT) each bind GTP. Asp-13 acts as the Proton acceptor in catalysis. Residues Asp-13 and Gly-40 each contribute to the Mg(2+) site. IMP-binding positions include 13 to 16 (DEGK), 38 to 41 (NAGH), Thr-128, Arg-142, Gln-223, Thr-238, and Arg-302. Catalysis depends on His-41, which acts as the Proton donor. 298–304 (TTTGRKR) is a substrate binding site. GTP is bound by residues Arg-304, 330–332 (KLD), and 412–414 (SLG).

It belongs to the adenylosuccinate synthetase family. In terms of assembly, homodimer. The cofactor is Mg(2+).

It localises to the cytoplasm. It catalyses the reaction IMP + L-aspartate + GTP = N(6)-(1,2-dicarboxyethyl)-AMP + GDP + phosphate + 2 H(+). The protein operates within purine metabolism; AMP biosynthesis via de novo pathway; AMP from IMP: step 1/2. Its function is as follows. Plays an important role in the de novo pathway of purine nucleotide biosynthesis. Catalyzes the first committed step in the biosynthesis of AMP from IMP. This is Adenylosuccinate synthetase from Nostoc punctiforme (strain ATCC 29133 / PCC 73102).